Consider the following 207-residue polypeptide: Proteasome subunit beta (207 aa).

Residues 1–7 (MVEAFKG) constitute a propeptide, removed in mature form; by autocatalysis. Thr-8 (nucleophile) is an active-site residue.

It belongs to the peptidase T1B family. In terms of assembly, the 20S proteasome core is composed of 14 alpha and 14 beta subunits that assemble into four stacked heptameric rings, resulting in a barrel-shaped structure. The two inner rings, each composed of seven catalytic beta subunits, are sandwiched by two outer rings, each composed of seven alpha subunits. The catalytic chamber with the active sites is on the inside of the barrel. Has a gated structure, the ends of the cylinder being occluded by the N-termini of the alpha-subunits. Is capped at one or both ends by the proteasome regulatory ATPase, PAN.

The protein localises to the cytoplasm. It catalyses the reaction Cleavage of peptide bonds with very broad specificity.. Its activity is regulated as follows. The formation of the proteasomal ATPase PAN-20S proteasome complex, via the docking of the C-termini of PAN into the intersubunit pockets in the alpha-rings, triggers opening of the gate for substrate entry. Interconversion between the open-gate and close-gate conformations leads to a dynamic regulation of the 20S proteasome proteolysis activity. Functionally, component of the proteasome core, a large protease complex with broad specificity involved in protein degradation. The protein is Proteasome subunit beta of Methanothrix thermoacetophila (strain DSM 6194 / JCM 14653 / NBRC 101360 / PT) (Methanosaeta thermophila).